Reading from the N-terminus, the 342-residue chain is Ferredoxin--NADP reductase (342 aa).

C17, D36, Q44, Y49, I89, F124, D289, and T330 together coordinate FAD.

It belongs to the ferredoxin--NADP reductase type 2 family. Homodimer. FAD is required as a cofactor.

The enzyme catalyses 2 reduced [2Fe-2S]-[ferredoxin] + NADP(+) + H(+) = 2 oxidized [2Fe-2S]-[ferredoxin] + NADPH. This is Ferredoxin--NADP reductase from Rhodopseudomonas palustris (strain BisB5).